A 291-amino-acid polypeptide reads, in one-letter code: Protein-export membrane protein SecF (291 aa).

6 helical membrane-spanning segments follow: residues 19–39 (LVVIPLIILAVALLIIASWYV), 134–154 (LALGGVGVAFLGMSVLVFLMF), 156–176 (VFVPSIAVVVSAFSDIAISVA), 187–209 (LGTVAALLMIIGYSVDSDILLNN), 226–246 (MRTGVTMTLTSIIAMSVMAAV), and 256–278 (AAIGTVLVFGLIADLMNTYLLNL).

The protein belongs to the SecD/SecF family. SecF subfamily. As to quaternary structure, part of the protein translocation apparatus. Forms a complex with SecD.

It localises to the cell membrane. In terms of biological role, involved in protein export. This chain is Protein-export membrane protein SecF, found in Haloquadratum walsbyi (strain DSM 16790 / HBSQ001).